The primary structure comprises 138 residues: MTATFLMSMIFGLACGQAMSFCIPTEYMMHVERKECAYCLTINTTVCAGYCMTRDVNGKLFLPKYALSQDVCTYRDFMYKTAEIPGCPRHVTPYFSYPVAISCKCGKCNTDYSDCIHEAIKTNYCTKPQKSYMVGFSI.

The first 20 residues, 1 to 20 (MTATFLMSMIFGLACGQAMS), serve as a signal peptide directing secretion. Intrachain disulfides connect cysteine 22–cysteine 72, cysteine 36–cysteine 87, cysteine 39–cysteine 125, cysteine 47–cysteine 103, cysteine 51–cysteine 105, and cysteine 108–cysteine 115. A glycan (N-linked (GlcNAc...) asparagine) is linked at asparagine 43. Positions 133 to 138 (MVGFSI) are excised as a propeptide.

The protein belongs to the glycoprotein hormones subunit beta family. In terms of assembly, heterodimer of a common alpha chain and a unique beta chain which confers biological specificity to thyrotropin, lutropin, follitropin and gonadotropin.

It is found in the secreted. Functionally, indispensable for the control of thyroid structure and metabolism. This is Thyrotropin subunit beta (TSHB) from Bos taurus (Bovine).